The sequence spans 304 residues: D-alanine--D-alanine ligase (304 aa).

An ATP-grasp domain is found at Lys104 to Ala299. Ala130–Thr185 is an ATP binding site. The Mg(2+) site is built by Asp253, Glu266, and Asn268.

The protein belongs to the D-alanine--D-alanine ligase family. It depends on Mg(2+) as a cofactor. The cofactor is Mn(2+).

It localises to the cytoplasm. It catalyses the reaction 2 D-alanine + ATP = D-alanyl-D-alanine + ADP + phosphate + H(+). It functions in the pathway cell wall biogenesis; peptidoglycan biosynthesis. Cell wall formation. This chain is D-alanine--D-alanine ligase, found in Azoarcus sp. (strain BH72).